Consider the following 450-residue polypeptide: Phosphoglucosamine mutase (450 aa).

Catalysis depends on Ser104, which acts as the Phosphoserine intermediate. Mg(2+) contacts are provided by Ser104, Asp243, Asp245, and Asp247. The residue at position 104 (Ser104) is a Phosphoserine.

The protein belongs to the phosphohexose mutase family. It depends on Mg(2+) as a cofactor. Activated by phosphorylation.

The catalysed reaction is alpha-D-glucosamine 1-phosphate = D-glucosamine 6-phosphate. In terms of biological role, catalyzes the conversion of glucosamine-6-phosphate to glucosamine-1-phosphate. This is Phosphoglucosamine mutase from Cutibacterium acnes (strain DSM 16379 / KPA171202) (Propionibacterium acnes).